The chain runs to 214 residues: Large ribosomal subunit protein uL3 (214 aa).

The interval alanine 134–threonine 153 is disordered. Glutamine 152 is subject to N5-methylglutamine.

Belongs to the universal ribosomal protein uL3 family. In terms of assembly, part of the 50S ribosomal subunit. Forms a cluster with proteins L14 and L19. Post-translationally, methylated by PrmB.

Its function is as follows. One of the primary rRNA binding proteins, it binds directly near the 3'-end of the 23S rRNA, where it nucleates assembly of the 50S subunit. The polypeptide is Large ribosomal subunit protein uL3 (Buchnera aphidicola subsp. Baizongia pistaciae (strain Bp)).